The chain runs to 241 residues: Type III pantothenate kinase (241 aa).

6–13 lines the ATP pocket; the sequence is DVGNTRIK. Substrate is bound at residue 94–97; that stretch reads GIDR. The active-site Proton acceptor is the D96. Residue D117 participates in K(+) binding. ATP is bound at residue T120. Residue T172 participates in substrate binding.

This sequence belongs to the type III pantothenate kinase family. As to quaternary structure, homodimer. NH4(+) is required as a cofactor. It depends on K(+) as a cofactor.

The protein resides in the cytoplasm. The catalysed reaction is (R)-pantothenate + ATP = (R)-4'-phosphopantothenate + ADP + H(+). Its pathway is cofactor biosynthesis; coenzyme A biosynthesis; CoA from (R)-pantothenate: step 1/5. Functionally, catalyzes the phosphorylation of pantothenate (Pan), the first step in CoA biosynthesis. The protein is Type III pantothenate kinase of Flavobacterium psychrophilum (strain ATCC 49511 / DSM 21280 / CIP 103535 / JIP02/86).